Here is a 398-residue protein sequence, read N- to C-terminus: Queuine tRNA-ribosyltransferase (398 aa).

Residue Asp102 is the Proton acceptor of the active site. Substrate-binding positions include 102-106 (DSGGF), Asp156, Gln205, and Gly232. Positions 263–269 (GVGTPED) are RNA binding. The active-site Nucleophile is Asp282. The tract at residues 287–291 (TRNAR) is RNA binding; important for wobble base 34 recognition. Residues Cys320, Cys322, Cys325, and His362 each coordinate Zn(2+).

Belongs to the queuine tRNA-ribosyltransferase family. Homodimer. Within each dimer, one monomer is responsible for RNA recognition and catalysis, while the other monomer binds to the replacement base PreQ1. The cofactor is Zn(2+).

It catalyses the reaction 7-aminomethyl-7-carbaguanine + guanosine(34) in tRNA = 7-aminomethyl-7-carbaguanosine(34) in tRNA + guanine. Its pathway is tRNA modification; tRNA-queuosine biosynthesis. Catalyzes the base-exchange of a guanine (G) residue with the queuine precursor 7-aminomethyl-7-deazaguanine (PreQ1) at position 34 (anticodon wobble position) in tRNAs with GU(N) anticodons (tRNA-Asp, -Asn, -His and -Tyr). Catalysis occurs through a double-displacement mechanism. The nucleophile active site attacks the C1' of nucleotide 34 to detach the guanine base from the RNA, forming a covalent enzyme-RNA intermediate. The proton acceptor active site deprotonates the incoming PreQ1, allowing a nucleophilic attack on the C1' of the ribose to form the product. After dissociation, two additional enzymatic reactions on the tRNA convert PreQ1 to queuine (Q), resulting in the hypermodified nucleoside queuosine (7-(((4,5-cis-dihydroxy-2-cyclopenten-1-yl)amino)methyl)-7-deazaguanosine). This chain is Queuine tRNA-ribosyltransferase, found in Polaromonas sp. (strain JS666 / ATCC BAA-500).